The primary structure comprises 972 residues: Structural polyprotein (972 aa).

Aspartate 26 is an a divalent metal cation binding site. In terms of domain architecture, Peptidase S50 spans serine 509 to alanine 734. The active-site Nucleophile is the serine 633. Lysine 674 is an active-site residue. Disordered stretches follow at residues lysine 794–alanine 817 and asparagine 916–valine 972. Residues lysine 801 to alanine 817 show a composition bias toward basic and acidic residues. Positions phenylalanine 963–valine 972 are enriched in polar residues.

As to quaternary structure, homotrimer. A central divalent metal (possibly cobalt) stabilizes the VP2 trimer. Homodimer. interacts (via C-terminus) with VP1 in the cytoplasm. Interacts with VP2. Post-translationally, specific enzymatic cleavages yield mature proteins. The capsid assembly seems to be regulated by polyprotein processing. The protease VP4 cleaves itself off the polyprotein, thus releasing pre-VP2 and VP3 within the infected cell. During capsid assembly, the C-terminus of pre-VP2 is further processed by VP4, giving rise to VP2, the external capsid protein and three small peptides that all stay closely associated with the capsid.

It localises to the virion. The protein localises to the host cytoplasm. Capsid protein VP2 self assembles to form an icosahedral capsid with a T=13 symmetry, about 70 nm in diameter, and consisting of 260 VP2 trimers. The capsid encapsulates the genomic dsRNA. VP2 is also involved in attachment and entry into the host cell. In terms of biological role, the precursor of VP2 plays an important role in capsid assembly. First, pre-VP2 and VP2 oligomers assemble to form a procapsid. Then, the pre-VP2 intermediates may be processed into VP2 proteins by proteolytic cleavage mediated by VP4 to obtain the mature virion. The final capsid is composed of pentamers and hexamers but VP2 has a natural tendency to assemble into all-pentameric structures. Therefore pre-VP2 may be required to allow formation of the hexameric structures. Functionally, protease VP4 is a serine protease that cleaves the polyprotein into its final products. Pre-VP2 is first partially cleaved, and may be completely processed by VP4 upon capsid maturation. Its function is as follows. Capsid protein VP3 plays a key role in virion assembly by providing a scaffold for the capsid made of VP2. May self-assemble to form a T=4-like icosahedral inner-capsid composed of at least 180 trimers. Plays a role in genomic RNA packaging by recruiting VP1 into the capsid and interacting with the dsRNA genome segments to form a ribonucleoprotein complex. Additionally, the interaction of the VP3 C-terminal tail with VP1 removes the inherent structural blockade of the polymerase active site. Thus, VP3 can also function as a transcriptional activator. Structural peptide 1 is a small peptide derived from pre-VP2 C-terminus. It destabilizes and perforates cell membranes, suggesting a role during entry. In terms of biological role, structural peptide 2 is a small peptide derived from pVP2 C-terminus. It is not essential for the virus viability, but viral growth is affected when missing. Functionally, structural peptide 3 is a small peptide derived from pVP2 C-terminus. It is not essential for the virus viability, but viral growth is affected when missing. The sequence is that of Structural polyprotein from Infectious pancreatic necrosis virus (strain Sp) (IPNV).